A 424-amino-acid polypeptide reads, in one-letter code: MASQKPHLNLITIGHVDHGKSTLVGRLLYEHGEIPAHIIEEYRKEAEQKGKATFEFAWVMDRFKEERERGVTIDLAHRKFETDKYYFTLIDAPGHRDFVKNMITGTSQADAAILVISAREGEGVMEQTREHAFLARTLGVPQMVVAINKMDATSPPYSEKRYNEVKADAEKLLRSIGFKDISFVPISGYKGDNVTKPSPNMPWYKGPTLLQALDAFKVPEKPINKPLRIPVEDVYSITGIGTVPVGRVETGVLKPGDKVIFLPADKQGDVKSIEMHHEPLQQAEPGDNIGFNVRGIAKNDIKRGDVCGHLDTPPTVVKAFTAQIIVLNHPSVIAPGYKPVFHVHTAQVACRIDEIVKTLNPKDGTTLKEKPDFIKNGDVAIVKVIPDKPLVIEKVSEIPQLGRFAVRDMGQTVAAGQCIDLEKR.

In terms of domain architecture, tr-type G spans 5 to 223 (KPHLNLITIG…DAFKVPEKPI (219 aa)). Residues 14–21 (GHVDHGKS) form a G1 region. 14–21 (GHVDHGKS) contacts GTP. Mg(2+) is bound at residue S21. Positions 70 to 74 (GVTID) are G2. Residues 91-94 (DAPG) are G3. Residues 91-95 (DAPGH) and 148-151 (NKMD) each bind GTP. Positions 148-151 (NKMD) are G4. A G5 region spans residues 187–189 (SGY).

It belongs to the TRAFAC class translation factor GTPase superfamily. Classic translation factor GTPase family. EF-Tu/EF-1A subfamily.

The protein localises to the cytoplasm. It carries out the reaction GTP + H2O = GDP + phosphate + H(+). Its function is as follows. GTP hydrolase that promotes the GTP-dependent binding of aminoacyl-tRNA to the A-site of ribosomes during protein biosynthesis. The chain is Elongation factor 1-alpha from Thermoplasma acidophilum (strain ATCC 25905 / DSM 1728 / JCM 9062 / NBRC 15155 / AMRC-C165).